The chain runs to 510 residues: Maturase K (510 aa).

It belongs to the intron maturase 2 family. MatK subfamily.

Its subcellular location is the plastid. The protein localises to the chloroplast. Its function is as follows. Usually encoded in the trnK tRNA gene intron. Probably assists in splicing its own and other chloroplast group II introns. The sequence is that of Maturase K from Mammillaria haageana (Cactus).